Consider the following 529-residue polypeptide: Plexin domain-containing protein 2 (529 aa).

Positions 1-30 (MARFPKADLAAAGVMLLCHFFTDQFQFADG) are cleaved as a signal peptide. Residues 31–454 (KPGDQILDWQ…AEKKGGTLHA (424 aa)) lie on the Extracellular side of the membrane. The interval 80-104 (ASVGQDSPEPRSFTDLLLDDGQDNN) is disordered. N-linked (GlcNAc...) asparagine glycosylation is found at N103 and N160. The region spanning 327–372 (TCLQFNRCGPCVSSQIGFNCSWCSKLQRCSSGFDRHRQDWVDSGCP) is the PSI domain. A helical membrane pass occupies residues 455 to 475 (GLIIGILILVLIVATAILVTV). Residues 476-529 (YMYHHPTSAASIFFIERRPSRWPAMKFRRGSGHPAYAEVEPVGEKEGFIVSEQC) lie on the Cytoplasmic side of the membrane. A Phosphoserine modification is found at S506.

The protein belongs to the plexin family. As to quaternary structure, interacts with CTTN. As to expression, expressed in the endothelial cells of the stroma but not in the endothelial cells of normal colonic tissue.

It is found in the membrane. Functionally, may play a role in tumor angiogenesis. This is Plexin domain-containing protein 2 (PLXDC2) from Homo sapiens (Human).